The primary structure comprises 317 residues: Putrescine transport system permease protein PotH (317 aa).

Residues 1–31 (MSTLEPAAQSKPPGGFKLWLSQLQMKHGRKL) lie on the Cytoplasmic side of the membrane. A helical transmembrane segment spans residues 32–51 (VIALPYIWLILLFLLPFLIV). At 52–104 (FKISLAEMARAIPPYTELMEWADGQLSITLNLGNFLQLTDDPLYFDAYLQSLQ) the chain is on the periplasmic side. Residues 99-305 (YLQSLQVAAI…LLLIVPIMWF (207 aa)) enclose the ABC transmembrane type-1 domain. Residues 105–124 (VAAISTFCCLLIGYPLAWAV) traverse the membrane as a helical segment. Residues 125 to 133 (AHSKPSTRN) are Cytoplasmic-facing. The helical transmembrane segment at 134 to 153 (ILLLLVILPSWTSFLIRVYA) threads the bilayer. Residues 154 to 184 (WMGILKNNGVLNNFLLWLGVIDQPLTILHTN) lie on the Periplasmic side of the membrane. The chain crosses the membrane as a helical span at residues 185–204 (LAVYIGIVYAYVPFMVLPIY). Over 205–239 (TALIRIDYSLVEAALDLGARPLKTFFTVIVPLTKG) the chain is Cytoplasmic. The chain crosses the membrane as a helical span at residues 240 to 259 (GIIAGSMLVFIPAVGEFVIP). Topologically, residues 260 to 284 (ELLGGPDSIMIGRVLWQEFFNNRDW) are periplasmic. The helical transmembrane segment at 285–304 (PVASAVAIIMLLLLIVPIMW) threads the bilayer. Topologically, residues 305-317 (FHKHQQKSVGEHG) are cytoplasmic.

It belongs to the binding-protein-dependent transport system permease family. CysTW subfamily. As to quaternary structure, the complex is composed of two ATP-binding proteins (PotG), two transmembrane proteins (PotH and PotI) and a solute-binding protein (PotF).

It is found in the cell inner membrane. Its activity is regulated as follows. Transport is feedback inhibited by intracellular polyamines. Part of the ABC transporter complex PotFGHI involved in putrescine uptake. Responsible for the translocation of the substrate across the membrane. Imports putrescine for maintenance of the optimal concentration of polyamines necessary for cell growth in the presence of glucose. This chain is Putrescine transport system permease protein PotH, found in Escherichia coli (strain K12).